The sequence spans 156 residues: ATP synthase subunit b (156 aa).

Residues 11-31 traverse the membrane as a helical segment; it reads AIAFAIFVMFCMKFVWPPLIG.

It belongs to the ATPase B chain family. F-type ATPases have 2 components, F(1) - the catalytic core - and F(0) - the membrane proton channel. F(1) has five subunits: alpha(3), beta(3), gamma(1), delta(1), epsilon(1). F(0) has three main subunits: a(1), b(2) and c(10-14). The alpha and beta chains form an alternating ring which encloses part of the gamma chain. F(1) is attached to F(0) by a central stalk formed by the gamma and epsilon chains, while a peripheral stalk is formed by the delta and b chains.

It is found in the cell inner membrane. F(1)F(0) ATP synthase produces ATP from ADP in the presence of a proton or sodium gradient. F-type ATPases consist of two structural domains, F(1) containing the extramembraneous catalytic core and F(0) containing the membrane proton channel, linked together by a central stalk and a peripheral stalk. During catalysis, ATP synthesis in the catalytic domain of F(1) is coupled via a rotary mechanism of the central stalk subunits to proton translocation. Its function is as follows. Component of the F(0) channel, it forms part of the peripheral stalk, linking F(1) to F(0). The sequence is that of ATP synthase subunit b from Psychrobacter cryohalolentis (strain ATCC BAA-1226 / DSM 17306 / VKM B-2378 / K5).